We begin with the raw amino-acid sequence, 417 residues long: Dibenzothiophene monooxygenase (417 aa).

FMN is bound by residues Tyr-96, 129–134 (NASSEN), 159–163 (KHFCS), Arg-282, 369–370 (AR), and His-391. Positions 131–142 (SSENNSHVLDWK) are lid loop.

Belongs to the DszC flavin monooxygenase family. Homotetramer. Homodimer. Requires FAD as cofactor. NADH serves as cofactor.

It is found in the cytoplasm. It carries out the reaction dibenzothiophene + 2 FMNH2 + 2 O2 = dibenzothiophene 5,5-dioxide + 2 FMN + 2 H2O + 2 H(+). The enzyme catalyses dibenzothiophene + FMNH2 + O2 = dibenzothiophene 5-oxide + FMN + H2O + H(+). It catalyses the reaction dibenzothiophene 5-oxide + FMNH2 + O2 = dibenzothiophene 5,5-dioxide + FMN + H2O + H(+). The protein operates within sulfur metabolism; dibenzothiophene degradation. Its function is as follows. Catalyzes the first step of the '4S' desulfurization pathway that removes covalently bound sulfur from dibenzothiophene (DBT) without breaking carbon-carbon bonds. Sulfur dioxygenase which converts DBT to DBT-sulfone (DBTO2 or DBT 5,5-dioxide) in a stepwise manner. In DBTO (dibenzothiophene-5-oxide) was reported not to be a substrate, in it is reported to be a substrate. Can also use benzyl sulfide and benzyl sulfoxide as substrates, although benzyl sulfoxide is a poor substrate. The pathway substrate specificity has been augmented using mutagenesis, however no mutations allowed use of alkylated thiophenes. This chain is Dibenzothiophene monooxygenase, found in Rhodococcus qingshengii.